The primary structure comprises 291 residues: 4-hydroxy-tetrahydrodipicolinate synthase (291 aa).

Thr-44 is a binding site for pyruvate. Residue Tyr-132 is the Proton donor/acceptor of the active site. Lys-160 functions as the Schiff-base intermediate with substrate in the catalytic mechanism. Val-202 provides a ligand contact to pyruvate.

It belongs to the DapA family. Homotetramer; dimer of dimers.

It localises to the cytoplasm. It carries out the reaction L-aspartate 4-semialdehyde + pyruvate = (2S,4S)-4-hydroxy-2,3,4,5-tetrahydrodipicolinate + H2O + H(+). Its pathway is amino-acid biosynthesis; L-lysine biosynthesis via DAP pathway; (S)-tetrahydrodipicolinate from L-aspartate: step 3/4. Catalyzes the condensation of (S)-aspartate-beta-semialdehyde [(S)-ASA] and pyruvate to 4-hydroxy-tetrahydrodipicolinate (HTPA). In Clostridium perfringens (strain 13 / Type A), this protein is 4-hydroxy-tetrahydrodipicolinate synthase.